Consider the following 217-residue polypeptide: Probable transaldolase (217 aa).

K83 acts as the Schiff-base intermediate with substrate in catalysis.

This sequence belongs to the transaldolase family. Type 3B subfamily.

It localises to the cytoplasm. The catalysed reaction is D-sedoheptulose 7-phosphate + D-glyceraldehyde 3-phosphate = D-erythrose 4-phosphate + beta-D-fructose 6-phosphate. Its pathway is carbohydrate degradation; pentose phosphate pathway; D-glyceraldehyde 3-phosphate and beta-D-fructose 6-phosphate from D-ribose 5-phosphate and D-xylulose 5-phosphate (non-oxidative stage): step 2/3. In terms of biological role, transaldolase is important for the balance of metabolites in the pentose-phosphate pathway. The protein is Probable transaldolase of Caulobacter sp. (strain K31).